A 66-amino-acid polypeptide reads, in one-letter code: UPF0337 protein bsl1473 (66 aa).

It belongs to the UPF0337 (CsbD) family.

This is UPF0337 protein bsl1473 from Bradyrhizobium diazoefficiens (strain JCM 10833 / BCRC 13528 / IAM 13628 / NBRC 14792 / USDA 110).